A 155-amino-acid polypeptide reads, in one-letter code: DNA-directed RNA polymerases I, II, and III subunit RPABC2 (155 aa).

The segment covering Met1–Asp19 has biased composition (acidic residues). A disordered region spans residues Met1–Asp57. Over residues Val20 to Glu39 the composition is skewed to basic and acidic residues. Ser24 carries the phosphoserine modification. The leucine-zipper stretch occupies residues Leu111–Leu132.

It belongs to the archaeal Rpo6/eukaryotic RPB6 RNA polymerase subunit family. As to quaternary structure, component of the RNA polymerase I (Pol I), RNA polymerase II (Pol II) and RNA polymerase III (Pol III) complexes. Component of the RNA polymerase I (Pol I) complex consisting of 14 subunits: RPA135, RPA190, RPC40, RPA14, RPB5, RPO26, RPA43, RPB8, RPA12, RPB10, RPC19, RPC10, RPA49 and RPA34. The complex is composed of a horseshoe-shaped core containing ten subunits (RPA135, RPA190, RPB5, RPO26, RPB8, RPB10, RPC10, RPA12, RPC19 and RPC40) where RPA135 and RPA190 form the DNA-binding cleft. Outside of the core, RPA14 and RPA43 form the stalk that mediates interactions with transcription initiation factors and newly synthesized RNA. Component of the RNA polymerase II (Pol II) complex consisting of 12 subunits: RPO21, RPB2, RPB3, RPB4, RPB5, RPO26, RPB7, RPB8, RPB9, RPB10 and RPC10. Component of the RNA polymerase III (Pol III) complex consisting of 17 subunits.

Its subcellular location is the cytoplasm. The protein localises to the nucleus. Its function is as follows. DNA-dependent RNA polymerases catalyze the transcription of DNA into RNA using the four ribonucleoside triphosphates as substrates. Common component of RNA polymerases I, II and III which synthesize ribosomal RNA precursors, mRNA precursors and many functional non-coding RNAs, and small RNAs, such as 5S rRNA and tRNAs, respectively. Pol II is the central component of the basal RNA polymerase II transcription machinery. RNA polymerases are composed of mobile elements that move relative to each other. In Pol II, RPB6 is part of the clamp element and together with parts of RPB1 and RPB2 forms a pocket to which the RPB4-RPB7 subcomplex binds. This is DNA-directed RNA polymerases I, II, and III subunit RPABC2 (RPO26) from Saccharomyces cerevisiae (strain ATCC 204508 / S288c) (Baker's yeast).